The following is a 163-amino-acid chain: S-fimbrial adhesin protein SfaS (163 aa).

Positions 1 to 22 are cleaved as a signal peptide; the sequence is MKLKAIILATGLINCIAFSAQA. A disulfide bridge links C38 with C75. Residues 138–144 form an involved in sialic acid binding region; sequence KARAVSK.

Belongs to the fimbrial protein family.

Its subcellular location is the fimbrium. In terms of biological role, fimbriae (also called pili), polar filaments radiating from the surface of the bacterium to a length of 0.5-1.5 micrometers and numbering 100-300 per cell, enable bacteria to colonize the epithelium of specific host organs. A minor fimbrial subunit, this protein is necessary for full expression of S-specific binding. S-fimbrial adhesins enable pathogenic E.coli causing urinary-tract infections or newborn meningitis to attach to glycoproteins terminating with alpha-sialic acid-(2-3)-beta-Gal. This protein binds to the alpha-sialic acid-(2-3)-beta-Gal and is thus responsible for erythrocyte recognition and hemagglutination. The protein is S-fimbrial adhesin protein SfaS (sfaS) of Escherichia coli O6:K15:H31 (strain 536 / UPEC).